The sequence spans 541 residues: Chaperonin GroEL 2 (541 aa).

ATP-binding positions include 29–32 (TLGP), 86–90 (DGTTT), G414, 478–480 (DAA), and D494.

It belongs to the chaperonin (HSP60) family. As to quaternary structure, forms a cylinder of 14 subunits composed of two heptameric rings stacked back-to-back. Interacts with the co-chaperonin GroES.

The protein localises to the cytoplasm. The catalysed reaction is ATP + H2O + a folded polypeptide = ADP + phosphate + an unfolded polypeptide.. Together with its co-chaperonin GroES, plays an essential role in assisting protein folding. The GroEL-GroES system forms a nano-cage that allows encapsulation of the non-native substrate proteins and provides a physical environment optimized to promote and accelerate protein folding. This chain is Chaperonin GroEL 2, found in Frankia casuarinae (strain DSM 45818 / CECT 9043 / HFP020203 / CcI3).